The sequence spans 356 residues: Mitogen-activated protein kinase PMK1 (356 aa).

The Protein kinase domain maps to 24 to 312 (YDIQDVVGEG…VEEALKHPYL (289 aa)). ATP contacts are provided by residues 30-38 (VGEGAYGVV) and K53.

This sequence belongs to the protein kinase superfamily. CMGC Ser/Thr protein kinase family. MAP kinase subfamily. Mg(2+) is required as a cofactor. Phosphorylated by MST7.

It carries out the reaction L-seryl-[protein] + ATP = O-phospho-L-seryl-[protein] + ADP + H(+). The catalysed reaction is L-threonyl-[protein] + ATP = O-phospho-L-threonyl-[protein] + ADP + H(+). In terms of biological role, mitogen-activated protein kinase; part of the MST11-MST7-PMK1 MAP kinase (MAPK) cascade that is essential for appressorium formation, penetration and invasive growth. Central regulator of appressorium development that acts downstream of the cAMP signal. The MST11-MST7-PMK1 MAP kinase cascade transduces signals from the cell surface sensors MDB2 and SHO1 that recognize various surface signals such as surface hydrophobicity, cutin monomers, and rice leaf waxes. Regulates expression of secreted fungal effector proteins implicated of host immune defenses, preventing reactive oxygen species generation and excessive callose deposition at plasmodesmata. Furthermore, controls the hyphal constriction required for fungal growth from one rice cell to the neighboring cell, enabling host tissue colonization and blast disease. Targets downstream of the PMK1-MAPK pathway include transcription factor MST12 and pathogenicity-related genes GAS1 and GAS2, both of which are expressed during appressorium formation, even if regulation of MST12 is not associated with expression of GAS1 or GAS2. The sequence is that of Mitogen-activated protein kinase PMK1 from Pyricularia oryzae (Rice blast fungus).